We begin with the raw amino-acid sequence, 62 residues long: Inner membrane protein p12 (62 aa).

A helical membrane pass occupies residues 16 to 36 (LLIVAIVVVIMAIMLYYFWWM).

It belongs to the asfivirus inner membrane protein p12 family. As to quaternary structure, homomultimer; disulfide-linked. In terms of processing, not glycosylated.

The protein resides in the virion membrane. In African swine fever virus (isolate Pig/Kenya/KEN-50/1950) (ASFV), this protein is Inner membrane protein p12.